The sequence spans 121 residues: Large ribosomal subunit protein uL18 (121 aa).

The disordered stretch occupies residues 63-88 (AAIRPDPSPKKSQKQPPKTHKRYNLK). The segment covering 73–87 (KSQKQPPKTHKRYNL) has biased composition (basic residues).

Belongs to the universal ribosomal protein uL18 family. As to quaternary structure, component of the large ribosomal subunit (LSU).

It is found in the cytoplasm. The protein resides in the nucleus. Functionally, component of the ribosome, a large ribonucleoprotein complex responsible for the synthesis of proteins in the cell. The small ribosomal subunit (SSU) binds messenger RNAs (mRNAs) and translates the encoded message by selecting cognate aminoacyl-transfer RNA (tRNA) molecules. The large subunit (LSU) contains the ribosomal catalytic site termed the peptidyl transferase center (PTC), which catalyzes the formation of peptide bonds, thereby polymerizing the amino acids delivered by tRNAs into a polypeptide chain. The nascent polypeptides leave the ribosome through a tunnel in the LSU and interact with protein factors that function in enzymatic processing, targeting, and the membrane insertion of nascent chains at the exit of the ribosomal tunnel. The protein is Large ribosomal subunit protein uL18 (RPL5) of Solanum melongena (Eggplant).